Here is a 752-residue protein sequence, read N- to C-terminus: Phosphoribosylformylglycinamidine synthase subunit PurL (752 aa).

Residue His-58 is part of the active site. The ATP site is built by Tyr-61 and Lys-103. Glu-105 serves as a coordination point for Mg(2+). Substrate is bound by residues 106 to 109 (SHNH) and Arg-128. Catalysis depends on His-107, which acts as the Proton acceptor. Asp-129 serves as a coordination point for Mg(2+). Gln-253 provides a ligand contact to substrate. Position 281 (Asp-281) interacts with Mg(2+). 325–327 (ESQ) provides a ligand contact to substrate. Residues Asp-513 and Gly-550 each contribute to the ATP site. Asn-551 is a binding site for Mg(2+). Ser-553 contacts substrate.

This sequence belongs to the FGAMS family. In terms of assembly, monomer. Part of the FGAM synthase complex composed of 1 PurL, 1 PurQ and 2 PurS subunits.

The protein resides in the cytoplasm. The catalysed reaction is N(2)-formyl-N(1)-(5-phospho-beta-D-ribosyl)glycinamide + L-glutamine + ATP + H2O = 2-formamido-N(1)-(5-O-phospho-beta-D-ribosyl)acetamidine + L-glutamate + ADP + phosphate + H(+). It functions in the pathway purine metabolism; IMP biosynthesis via de novo pathway; 5-amino-1-(5-phospho-D-ribosyl)imidazole from N(2)-formyl-N(1)-(5-phospho-D-ribosyl)glycinamide: step 1/2. Its function is as follows. Part of the phosphoribosylformylglycinamidine synthase complex involved in the purines biosynthetic pathway. Catalyzes the ATP-dependent conversion of formylglycinamide ribonucleotide (FGAR) and glutamine to yield formylglycinamidine ribonucleotide (FGAM) and glutamate. The FGAM synthase complex is composed of three subunits. PurQ produces an ammonia molecule by converting glutamine to glutamate. PurL transfers the ammonia molecule to FGAR to form FGAM in an ATP-dependent manner. PurS interacts with PurQ and PurL and is thought to assist in the transfer of the ammonia molecule from PurQ to PurL. The polypeptide is Phosphoribosylformylglycinamidine synthase subunit PurL (Streptomyces avermitilis (strain ATCC 31267 / DSM 46492 / JCM 5070 / NBRC 14893 / NCIMB 12804 / NRRL 8165 / MA-4680)).